We begin with the raw amino-acid sequence, 338 residues long: uncharacterized protein (338 aa).

A signal peptide spans 1–29 (MIKQLCKNITICTLALSTTFTVLPATSFA).

The protein belongs to the aerolysin family.

This is an uncharacterized protein from Staphylococcus aureus (strain USA300).